Here is a 202-residue protein sequence, read N- to C-terminus: MKICGITDVETAKSACEYGADALGFVFAESKREITPKRAEEIIQELPANVLKIGVFVNESVEVIQKIADECGLTHVQLHGDEDNYQIRRLNIPSIKSLGVTSESDMKNAQGYEADYILFDSPKEKFHGGNGKTFSWELLRDMPKELRKKMILAGGLNALNIEEAIRTVRPYMVDVSSGVETEGKKDVEKIKQFIIKAKECSK.

It belongs to the TrpF family.

The enzyme catalyses N-(5-phospho-beta-D-ribosyl)anthranilate = 1-(2-carboxyphenylamino)-1-deoxy-D-ribulose 5-phosphate. It functions in the pathway amino-acid biosynthesis; L-tryptophan biosynthesis; L-tryptophan from chorismate: step 3/5. The protein is N-(5'-phosphoribosyl)anthranilate isomerase of Bacillus cereus (strain ATCC 14579 / DSM 31 / CCUG 7414 / JCM 2152 / NBRC 15305 / NCIMB 9373 / NCTC 2599 / NRRL B-3711).